The sequence spans 782 residues: Cyclic nucleotide-gated channel beta-3 (782 aa).

Disordered regions lie at residues 1 to 111 and 147 to 168; these read MFKS…PKSK and GDISSPEASPQTAKPTAVPSTQ. Residues 1–213 lie on the Cytoplasmic side of the membrane; sequence MFKSLTIKSN…SIDSYTDRLY (213 aa). Basic and acidic residues-rich tracts occupy residues 13-25 and 57-73; these read KPREENDENKQDP and EESHAKMQDKISEKNSL. 2 stretches are compositionally biased toward polar residues: residues 74-83 and 152-168; these read RDLTTNPNHQ and PEASPQTAKPTAVPSTQ. Residues 214–237 traverse the membrane as a helical segment; the sequence is LLWLLLVTIAYNWNCWLIPLRLVF. Over 238-244 the chain is Extracellular; it reads PYQTPDN. The chain crosses the membrane as a helical span at residues 245-265; the sequence is THYWFITDITCDIIYLCDMLL. At 266 to 294 the chain is on the cytoplasmic side; that stretch reads IQPRLQFIKGGDIMVDSNELKRHYRSSTK. A helical membrane pass occupies residues 295 to 312; sequence FQLDVASVMPFDVFYLFF. At 313 to 315 the chain is on the extracellular side; that stretch reads GFN. A helical membrane pass occupies residues 316–330; the sequence is PVFRMNRILKYTSFF. Topologically, residues 331–343 are cytoplasmic; sequence EFNHHLESIMDKA. Positions 343–442 are ion conduction pathway; the sequence is AYIYRVIRTT…IGQMQDVIGA (100 aa). A helical membrane pass occupies residues 344-366; that stretch reads YIYRVIRTTGYLLYTLHINACIY. The Extracellular portion of the chain corresponds to 367–388; it reads YWASDYEGIGSTKWVYNGEGNK. Helical transmembrane passes span 389–415 and 416–440; these read YLRCYYWAVRTLITIGGLPEPQTSFEI and VFQLLNFFSGVFVFSSLIGQMQDVI. Positions 402–405 are selectivity filter; it reads TIGG. Topologically, residues 441–782 are cytoplasmic; the sequence is GAATANQNNF…TIEVKEKAKQ (342 aa). Residues 445–521 are C-linker; sequence ANQNNFRISM…SIISKVELFK (77 aa). The cyclic nucleotide-binding domain stretch occupies residues 525-641; sequence TQMIYDMLLR…LLMKKASVLL (117 aa). 3',5'-cyclic GMP contacts are provided by glycine 586, glutamate 587, arginine 599, and threonine 600. The disordered stretch occupies residues 692–724; sequence EQTIQKTSENSEEGGGKRREYEDKEREPSEKIL. Residues 705-724 show a composition bias toward basic and acidic residues; it reads GGGKRREYEDKEREPSEKIL.

Belongs to the cyclic nucleotide-gated cation channel (TC 1.A.1.5) family. CNGB3 subfamily. As to quaternary structure, forms heterotetrameric channels composed of CNGA3 and CNGB3 subunits with 3:1 stoichiometry.

The protein localises to the cell membrane. It catalyses the reaction Ca(2+)(in) = Ca(2+)(out). It carries out the reaction Na(+)(in) = Na(+)(out). The enzyme catalyses K(+)(in) = K(+)(out). The catalysed reaction is NH4(+)(in) = NH4(+)(out). It catalyses the reaction Rb(+)(in) = Rb(+)(out). It carries out the reaction Li(+)(in) = Li(+)(out). The enzyme catalyses Cs(+)(in) = Cs(+)(out). Functionally, pore-forming subunit of the cone cyclic nucleotide-gated channel. Mediates cone photoresponses at bright light converting transient changes in intracellular cGMP levels into electrical signals. In the dark, cGMP levels are high and keep the channel open enabling a steady inward current carried by Na(+) and Ca(2+) ions that leads to membrane depolarization and neurotransmitter release from synaptic terminals. Upon photon absorption cGMP levels decline leading to channel closure and membrane hyperpolarization that ultimately slows neurotransmitter release and signals the presence of light, the end point of the phototransduction cascade. Conducts cGMP- and cAMP-gated ion currents, with permeability for monovalent and divalent cations. In Canis lupus familiaris (Dog), this protein is Cyclic nucleotide-gated channel beta-3.